The sequence spans 438 residues: Anaerobic glycerol-3-phosphate dehydrogenase subunit B (438 aa).

The protein belongs to the anaerobic G-3-P dehydrogenase subunit B family. In terms of assembly, composed of a catalytic GlpA/B dimer and of membrane bound GlpC. It depends on FMN as a cofactor.

The catalysed reaction is a quinone + sn-glycerol 3-phosphate = dihydroxyacetone phosphate + a quinol. Its pathway is polyol metabolism; glycerol degradation via glycerol kinase pathway; glycerone phosphate from sn-glycerol 3-phosphate (anaerobic route): step 1/1. Functionally, conversion of glycerol 3-phosphate to dihydroxyacetone. Uses fumarate or nitrate as electron acceptor. This chain is Anaerobic glycerol-3-phosphate dehydrogenase subunit B, found in Vibrio vulnificus (strain CMCP6).